Here is a 105-residue protein sequence, read N- to C-terminus: Urease subunit beta (105 aa).

Belongs to the urease beta subunit family. In terms of assembly, heterotrimer of UreA (gamma), UreB (beta) and UreC (alpha) subunits. Three heterotrimers associate to form the active enzyme.

The protein localises to the cytoplasm. The enzyme catalyses urea + 2 H2O + H(+) = hydrogencarbonate + 2 NH4(+). Its pathway is nitrogen metabolism; urea degradation; CO(2) and NH(3) from urea (urease route): step 1/1. This Pseudomonas putida (strain GB-1) protein is Urease subunit beta.